The following is a 288-amino-acid chain: Putative N-terminal acetyltransferase 2 (288 aa).

The interval 68–90 (TEEKSSQFDENKSKSNNGKKNEP) is disordered.

In terms of assembly, heterooligomeric.

It localises to the cytoplasm. In terms of biological role, maybe involved in N-terminal acetylation of proteins. N-acetylation plays a role in normal eukaryotic translation and processing, protect against proteolytic degradation and protein turnover. The polypeptide is Putative N-terminal acetyltransferase 2 (NAT2) (Saccharomyces cerevisiae (strain ATCC 204508 / S288c) (Baker's yeast)).